The primary structure comprises 161 residues: MRKFLSKEYHRTNPLWHVYRLVKFSKVFKNVIIIEFSKFIPSMVLKRHIYKQILNINIGNQSSIAYKVMLDIFYPELITIGSNSVIGYNVTILTHEALVDEFRYGPVTIGSNTLIGANATILPGITIGDNVKVAAGTVVSKDIPDNGFAYGNPMYIKMIRR.

The protein belongs to the transferase hexapeptide repeat family.

The protein is Putative acetyltransferase SAR0816 of Staphylococcus aureus (strain MRSA252).